The following is a 673-amino-acid chain: Beta-galactosidase 8 (673 aa).

The signal sequence occupies residues 1-20 (MGPSRSFQNLLLLLLPLALA). Residue asparagine 38 is glycosylated (N-linked (GlcNAc...) asparagine). The active-site Proton donor is glutamate 189. An N-linked (GlcNAc...) asparagine glycan is attached at asparagine 230. Catalysis depends on glutamate 272, which acts as the Nucleophile. Asparagine 304, asparagine 329, asparagine 401, asparagine 489, and asparagine 540 each carry an N-linked (GlcNAc...) asparagine glycan.

Belongs to the glycosyl hydrolase 35 family.

The protein localises to the secreted. It is found in the extracellular space. It localises to the apoplast. The catalysed reaction is Hydrolysis of terminal non-reducing beta-D-galactose residues in beta-D-galactosides.. This is Beta-galactosidase 8 from Oryza sativa subsp. japonica (Rice).